The primary structure comprises 66 residues: DNA gyrase inhibitor YacG (66 aa).

Residues Cys10, Cys13, Cys29, and Cys33 each coordinate Zn(2+). The disordered stretch occupies residues 46–66 (KRIPSDVQITDSDEWSDETRY). Over residues 56–66 (DSDEWSDETRY) the composition is skewed to acidic residues.

This sequence belongs to the DNA gyrase inhibitor YacG family. In terms of assembly, interacts with GyrB. Requires Zn(2+) as cofactor.

In terms of biological role, inhibits all the catalytic activities of DNA gyrase by preventing its interaction with DNA. Acts by binding directly to the C-terminal domain of GyrB, which probably disrupts DNA binding by the gyrase. This chain is DNA gyrase inhibitor YacG, found in Sodalis glossinidius (strain morsitans).